The chain runs to 250 residues: GTP cyclohydrolase 1 (250 aa).

2 stretches are compositionally biased toward basic and acidic residues: residues 1 to 14 (MEKG…EKPR) and 35 to 44 (PAEKPPRPEA). The tract at residues 1-64 (MEKGPVRAPA…GERPRSEEDN (64 aa)) is disordered. Ser-60 and Ser-81 each carry phosphoserine. The Zn(2+) site is built by Cys-141, His-144, and Cys-212.

The protein belongs to the GTP cyclohydrolase I family. As to quaternary structure, toroid-shaped homodecamer, composed of a dimer of pentamers. The inactive isoforms also form decamers and may possibly be incorporated into GCH1 heterodecamers, decreasing enzyme stability and activity. Interacts with AHSA1 and GCHFR/GFRP. Post-translationally, phosphorylated by casein kinase II at Ser-81 in HAECs during oscillatory shear stress; phosphorylation at Ser-81 results in increased enzyme activity. As to expression, in epidermis, expressed predominantly in basal undifferentiated keratinocytes and in some but not all melanocytes (at protein level).

It is found in the cytoplasm. The protein localises to the nucleus. It carries out the reaction GTP + H2O = 7,8-dihydroneopterin 3'-triphosphate + formate + H(+). The protein operates within cofactor biosynthesis; 7,8-dihydroneopterin triphosphate biosynthesis; 7,8-dihydroneopterin triphosphate from GTP: step 1/1. GTP shows a positive allosteric effect, and tetrahydrobiopterin inhibits the enzyme activity. Zinc is required for catalytic activity. Inhibited by Mg(2+). Its function is as follows. Positively regulates nitric oxide synthesis in umbilical vein endothelial cells (HUVECs). May be involved in dopamine synthesis. May modify pain sensitivity and persistence. Isoform GCH-1 is the functional enzyme, the potential function of the enzymatically inactive isoforms remains unknown. The polypeptide is GTP cyclohydrolase 1 (GCH1) (Homo sapiens (Human)).